Consider the following 440-residue polypeptide: MPAALQRRSWVPAASEDHVLAIAADAAARDALGIAAEIERLADDNHRIHDREGLNLNPATNVMNPAAEALLSRGLGSRASLGYPGDKYEVGLEAIERIEVIAAELAAEVFGSKFAEVRVSSGALSNLYVFMATCRPGDTIIAPPPAIGGHVTHHAAGAAGLYGLKTVPAPVDADGYTVDAAALARLAREVKPKLITIGGSLNLFPHPVPAIREVADSVGAKLLFDAAHLSGMVAGKAWPQPLEEGAHAITMSTYKSLGGPAGGLIVSNDAALMERIDAIAYPGLTANSDAGRTAALARGLLDWKVHGRAYAAAMRETAQALAHALDAEGLPVFAKARGFTQSHQFALEAAHWGGGQRAAKKLAEGGLLACGIGLPIAPVEGDINGLRLGVPEIVRLGFTPDDMPQLASWIARALEGGGASVAAEVRERRTRLGGLRYIVR.

Lys-255 is modified (N6-(pyridoxal phosphate)lysine).

This sequence belongs to the SHMT family. Alpha-methylserine aldolase subfamily. As to quaternary structure, homodimer. The cofactor is pyridoxal 5'-phosphate.

The catalysed reaction is 2-methyl-L-serine = formaldehyde + L-alanine. Functionally, catalyzes the reversible interconversion of alpha-methyl-L-serine to L-alanine and formaldehyde. This Variovorax paradoxus protein is Alpha-methylserine aldolase.